The following is a 472-amino-acid chain: Maintenance of mitochondrial morphology protein 1 (472 aa).

Residues 1 to 22 (MAFQQGEAAPVSTQSSLSFTQG) lie on the Lumenal side of the membrane. Residues 23 to 43 (FLLGQLSVVLLIGAFIKFFIF) form a helical membrane-spanning segment. Residues 44 to 472 (GEAPPPPSRG…GSMPEAPGAQ (429 aa)) lie on the Cytoplasmic side of the membrane. Disordered stretches follow at residues 51–92 (SRGL…VPSS), 270–303 (LHTPSPMPSPPTAGAQPAAGAQPTDGGDIPPKSS), and 370–472 (RMGR…PGAQ). The segment covering 81-92 (STSNVLRPVPSS) has biased composition (polar residues). One can recognise an SMP-LTD domain in the interval 124–365 (QPESLDWFNV…EPRVQVVGLP (242 aa)). Positions 270–280 (LHTPSPMPSPP) are enriched in pro residues. The span at 281-297 (TAGAQPAAGAQPTDGGD) shows a compositional bias: low complexity. Residues 450-460 (TRERSLGDDFH) show a composition bias toward basic and acidic residues.

Belongs to the MMM1 family. Homodimer. Component of the ER-mitochondria encounter structure (ERMES) or MDM complex, composed of mmm1, mdm10, mdm12 and mdm34. A mmm1 homodimer associates with one molecule of mdm12 on each side in a pairwise head-to-tail manner, and the SMP-LTD domains of mmm1 and mdm12 generate a continuous hydrophobic tunnel for phospholipid trafficking.

The protein resides in the endoplasmic reticulum membrane. In terms of biological role, component of the ERMES/MDM complex, which serves as a molecular tether to connect the endoplasmic reticulum (ER) and mitochondria. Components of this complex are involved in the control of mitochondrial shape and protein biogenesis, and function in nonvesicular lipid trafficking between the ER and mitochondria. The mdm12-mmm1 subcomplex functions in the major beta-barrel assembly pathway that is responsible for biogenesis of all outer membrane beta-barrel proteins, and acts in a late step after the SAM complex. The mdm10-mdm12-mmm1 subcomplex further acts in the TOM40-specific pathway after the action of the mdm12-mmm1 complex. Essential for establishing and maintaining the structure of mitochondria and maintenance of mtDNA nucleoids. This Emericella nidulans (strain FGSC A4 / ATCC 38163 / CBS 112.46 / NRRL 194 / M139) (Aspergillus nidulans) protein is Maintenance of mitochondrial morphology protein 1.